A 191-amino-acid polypeptide reads, in one-letter code: UPF0398 protein LCABL_17010 (191 aa).

It belongs to the UPF0398 family.

This chain is UPF0398 protein LCABL_17010, found in Lacticaseibacillus casei (strain BL23) (Lactobacillus casei).